We begin with the raw amino-acid sequence, 277 residues long: Ras suppressor protein 1 (277 aa).

A disordered region spans residues 1-23 (MSKSLKKLVEESREKNQPEVDMS). Ser2 carries the N-acetylserine modification. Basic and acidic residues predominate over residues 7–23 (KLVEESREKNQPEVDMS). LRR repeat units lie at residues 41 to 63 (HITQ…AELK), 64 to 85 (NLEV…ISSL), 87 to 108 (KLKH…FGSS), 110 to 133 (LLEV…FFYL), 135 to 156 (TLRA…IGKL), 158 to 179 (KLQI…IGEL), and 181 to 202 (QLKE…LGNL). Residues 250–277 (MQANPEPPKKNNDKSKKISRKPLAAKNK) are disordered. Over residues 256-265 (PPKKNNDKSK) the composition is skewed to basic and acidic residues.

In terms of biological role, potentially plays a role in the Ras signal transduction pathway. Capable of suppressing v-Ras transformation in vitro. The sequence is that of Ras suppressor protein 1 (Rsu1) from Mus musculus (Mouse).